The chain runs to 70 residues: Cytochrome c oxidase subunit 8B, mitochondrial (70 aa).

A mitochondrion-targeting transit peptide spans M1 to H24. Topologically, residues V25 to S35 are mitochondrial matrix. A helical transmembrane segment spans residues P36–S59. The Mitochondrial intermembrane portion of the chain corresponds to H60–A70.

The protein belongs to the cytochrome c oxidase VIII family. In terms of assembly, component of the cytochrome c oxidase (complex IV, CIV), a multisubunit enzyme composed of 14 subunits. The complex is composed of a catalytic core of 3 subunits MT-CO1, MT-CO2 and MT-CO3, encoded in the mitochondrial DNA, and 11 supernumerary subunits COX4I, COX5A, COX5B, COX6A, COX6B, COX6C, COX7A, COX7B, COX7C, COX8 and NDUFA4, which are encoded in the nuclear genome. The complex exists as a monomer or a dimer and forms supercomplexes (SCs) in the inner mitochondrial membrane with NADH-ubiquinone oxidoreductase (complex I, CI) and ubiquinol-cytochrome c oxidoreductase (cytochrome b-c1 complex, complex III, CIII), resulting in different assemblies (supercomplex SCI(1)III(2)IV(1) and megacomplex MCI(2)III(2)IV(2)).

It localises to the mitochondrion inner membrane. It participates in energy metabolism; oxidative phosphorylation. Functionally, component of the cytochrome c oxidase, the last enzyme in the mitochondrial electron transport chain which drives oxidative phosphorylation. The respiratory chain contains 3 multisubunit complexes succinate dehydrogenase (complex II, CII), ubiquinol-cytochrome c oxidoreductase (cytochrome b-c1 complex, complex III, CIII) and cytochrome c oxidase (complex IV, CIV), that cooperate to transfer electrons derived from NADH and succinate to molecular oxygen, creating an electrochemical gradient over the inner membrane that drives transmembrane transport and the ATP synthase. Cytochrome c oxidase is the component of the respiratory chain that catalyzes the reduction of oxygen to water. Electrons originating from reduced cytochrome c in the intermembrane space (IMS) are transferred via the dinuclear copper A center (CU(A)) of subunit 2 and heme A of subunit 1 to the active site in subunit 1, a binuclear center (BNC) formed by heme A3 and copper B (CU(B)). The BNC reduces molecular oxygen to 2 water molecules using 4 electrons from cytochrome c in the IMS and 4 protons from the mitochondrial matrix. This is Cytochrome c oxidase subunit 8B, mitochondrial (COX8B) from Ateles belzebuth (White-bellied spider monkey).